Reading from the N-terminus, the 232-residue chain is Pyridoxal 5'-phosphate synthase subunit PdxS (232 aa).

The active-site Schiff-base intermediate with D-ribose 5-phosphate is the Lys-23. Gly-95 lines the D-ribose 5-phosphate pocket. Arg-107 contacts D-glyceraldehyde 3-phosphate. D-ribose 5-phosphate contacts are provided by residues Gly-156 and 177-178 (GS).

It belongs to the PdxS/SNZ family. In the presence of PdxT, forms a dodecamer of heterodimers.

It carries out the reaction aldehydo-D-ribose 5-phosphate + D-glyceraldehyde 3-phosphate + L-glutamine = pyridoxal 5'-phosphate + L-glutamate + phosphate + 3 H2O + H(+). The protein operates within cofactor biosynthesis; pyridoxal 5'-phosphate biosynthesis. Catalyzes the formation of pyridoxal 5'-phosphate from ribose 5-phosphate (RBP), glyceraldehyde 3-phosphate (G3P) and ammonia. The ammonia is provided by the PdxT subunit. Can also use ribulose 5-phosphate and dihydroxyacetone phosphate as substrates, resulting from enzyme-catalyzed isomerization of RBP and G3P, respectively. The sequence is that of Pyridoxal 5'-phosphate synthase subunit PdxS from Clostridium novyi.